A 445-amino-acid chain; its full sequence is Hydroxycinnamoyl-CoA:5-hydroxyanthranilate N-hydroxycinnamoyltransferase HHT4 (445 aa).

It belongs to the plant acyltransferase family.

It carries out the reaction 5-hydroxyanthranilate + (E)-4-coumaroyl-CoA = avenanthramide A + CoA. It catalyses the reaction 5-hydroxyanthranilate + (E)-caffeoyl-CoA = avenanthramide C + CoA. In terms of biological role, involved in the biosynthesis of avenanthramide phytoalexins, which are phenolic alkaloids found mainly in oats. Catalyzes the N-acylation of 5-hydroxyanthranilate with 4-coumaroyl-CoA or caffeoyl-CoA as acyl donors, forming avenanthramide A and avenanthramide C, respectively. Does not accept feruloyl-CoA as a substrate. The protein is Hydroxycinnamoyl-CoA:5-hydroxyanthranilate N-hydroxycinnamoyltransferase HHT4 of Avena sativa (Oat).